The primary structure comprises 101 residues: Protein translation factor SUI1 homolog (101 aa).

It belongs to the SUI1 family.

In Methanosphaera stadtmanae (strain ATCC 43021 / DSM 3091 / JCM 11832 / MCB-3), this protein is Protein translation factor SUI1 homolog.